Reading from the N-terminus, the 244-residue chain is Phosphoadenosine 5'-phosphosulfate reductase (244 aa).

The active-site Nucleophile; cysteine thiosulfonate intermediate is cysteine 239.

It belongs to the PAPS reductase family. CysH subfamily.

It is found in the cytoplasm. It catalyses the reaction [thioredoxin]-disulfide + sulfite + adenosine 3',5'-bisphosphate + 2 H(+) = [thioredoxin]-dithiol + 3'-phosphoadenylyl sulfate. Its pathway is sulfur metabolism; hydrogen sulfide biosynthesis; sulfite from sulfate: step 3/3. Catalyzes the formation of sulfite from phosphoadenosine 5'-phosphosulfate (PAPS) using thioredoxin as an electron donor. This chain is Phosphoadenosine 5'-phosphosulfate reductase, found in Yersinia enterocolitica serotype O:8 / biotype 1B (strain NCTC 13174 / 8081).